The chain runs to 346 residues: Nucleoplasmin-like protein ANO39 (346 aa).

Position 2 is an N-acetylserine (Ser2). Asn85 is a glycosylation site (N-linked (GlcNAc...) asparagine). A compositionally biased stretch (acidic residues) spans 123-141 (DEEELEEDDEEEEEEDEVE). Residues 123 to 285 (DEEELEEDDE…KAKAKTDTKL (163 aa)) form a disordered region. A Phosphoserine; by CDC2 modification is found at Ser145. A compositionally biased stretch (basic and acidic residues) spans 171-180 (AKLDKDADKK). The segment covering 181 to 247 (EDDDEEEDDE…EEEEDEDEES (67 aa)) has biased composition (acidic residues). An N-linked (GlcNAc...) asparagine glycan is attached at Asn264. Residues 271 to 285 (GDNKPKAKAKTDTKL) are compositionally biased toward basic and acidic residues.

This sequence belongs to the nucleoplasmin family. Phosphorylation occurs in oocytes during the progression of the first meiotic M phase. No phosphorylation is observed in immature oocytes. In terms of tissue distribution, expressed specifically in the oocytes of the ovaries.

It localises to the nucleus. The protein localises to the nucleolus. The protein resides in the cytoplasm. Binds double-stranded RNA and both single-stranded and double-stranded DNA. This chain is Nucleoplasmin-like protein ANO39, found in Patiria pectinifera (Starfish).